Here is a 276-residue protein sequence, read N- to C-terminus: Putative phosphoenolpyruvate synthase regulatory protein (276 aa).

An ADP-binding site is contributed by 156 to 163 (GVSRSGKT).

The protein belongs to the pyruvate, phosphate/water dikinase regulatory protein family. PSRP subfamily.

It catalyses the reaction [pyruvate, water dikinase] + ADP = [pyruvate, water dikinase]-phosphate + AMP + H(+). It carries out the reaction [pyruvate, water dikinase]-phosphate + phosphate + H(+) = [pyruvate, water dikinase] + diphosphate. Its function is as follows. Bifunctional serine/threonine kinase and phosphorylase involved in the regulation of the phosphoenolpyruvate synthase (PEPS) by catalyzing its phosphorylation/dephosphorylation. The sequence is that of Putative phosphoenolpyruvate synthase regulatory protein from Acidovorax ebreus (strain TPSY) (Diaphorobacter sp. (strain TPSY)).